Here is a 194-residue protein sequence, read N- to C-terminus: UPF0232 protein MSMEG_0004/MSMEI_0006 (194 aa).

Over residues 1–14 the composition is skewed to acidic residues; it reads MTGPFDDDGPEEDA. The interval 1–81 is disordered; it reads MTGPFDDDGP…GPGPDARDPQ (81 aa). The segment covering 30 to 52 has biased composition (basic and acidic residues); the sequence is DLVRRTLEEARGAARSQGKDVGR.

Belongs to the UPF0232 family.

In Mycolicibacterium smegmatis (strain ATCC 700084 / mc(2)155) (Mycobacterium smegmatis), this protein is UPF0232 protein MSMEG_0004/MSMEI_0006.